A 214-amino-acid polypeptide reads, in one-letter code: Protein FAM167A (214 aa).

Disordered stretches follow at residues 1 to 26 (MSVP…PDDH) and 59 to 108 (PFPR…LSTG). Residues 118–156 (EAIAWLRKELTEMRLQDQQLARQLMRLRGDINKLKIEHT) adopt a coiled-coil conformation.

The protein belongs to the FAM167 (SEC) family. Expressed in skin, including primary keratinocytes, spleen, kidney, leukocytes, testis, lung, small intestine and prostate.

The chain is Protein FAM167A (FAM167A) from Homo sapiens (Human).